The chain runs to 414 residues: Poly(3-hydroxyalkanoate) depolymerase C (414 aa).

The signal sequence occupies residues 1 to 37 (MLAKQIKKANSRSTLLRKSLLFAAPIILAVSSSSVYA). The active-site Charge relay system is serine 154.

Belongs to the AB hydrolase superfamily. Lipase family.

It localises to the secreted. In terms of biological role, specific for poly(hydroxyalkanoic acid) consisting of monomers of four or five carbon atoms and for P-nitrophenylbutyrate as substrates. The polypeptide is Poly(3-hydroxyalkanoate) depolymerase C (phaZ1) (Paucimonas lemoignei (Pseudomonas lemoignei)).